Consider the following 343-residue polypeptide: Holliday junction branch migration complex subunit RuvB (343 aa).

Residues 4–193 (TDNLTAAQPQ…FGIVSRLEFY (190 aa)) are large ATPase domain (RuvB-L). Residues L32, R33, G74, K77, T78, T79, 140 to 142 (EDY), R183, Y193, and R230 contribute to the ATP site. Residue T78 participates in Mg(2+) binding. The small ATPAse domain (RuvB-S) stretch occupies residues 194–264 (ENRDLATIVS…IADAALSMLD (71 aa)). The interval 267–343 (VQGLDVMDRK…YLHFGLPVEK (77 aa)) is head domain (RuvB-H). DNA contacts are provided by R322 and R327.

The protein belongs to the RuvB family. Homohexamer. Forms an RuvA(8)-RuvB(12)-Holliday junction (HJ) complex. HJ DNA is sandwiched between 2 RuvA tetramers; dsDNA enters through RuvA and exits via RuvB. An RuvB hexamer assembles on each DNA strand where it exits the tetramer. Each RuvB hexamer is contacted by two RuvA subunits (via domain III) on 2 adjacent RuvB subunits; this complex drives branch migration. In the full resolvosome a probable DNA-RuvA(4)-RuvB(12)-RuvC(2) complex forms which resolves the HJ.

It localises to the cytoplasm. The enzyme catalyses ATP + H2O = ADP + phosphate + H(+). The RuvA-RuvB-RuvC complex processes Holliday junction (HJ) DNA during genetic recombination and DNA repair, while the RuvA-RuvB complex plays an important role in the rescue of blocked DNA replication forks via replication fork reversal (RFR). RuvA specifically binds to HJ cruciform DNA, conferring on it an open structure. The RuvB hexamer acts as an ATP-dependent pump, pulling dsDNA into and through the RuvAB complex. RuvB forms 2 homohexamers on either side of HJ DNA bound by 1 or 2 RuvA tetramers; 4 subunits per hexamer contact DNA at a time. Coordinated motions by a converter formed by DNA-disengaged RuvB subunits stimulates ATP hydrolysis and nucleotide exchange. Immobilization of the converter enables RuvB to convert the ATP-contained energy into a lever motion, pulling 2 nucleotides of DNA out of the RuvA tetramer per ATP hydrolyzed, thus driving DNA branch migration. The RuvB motors rotate together with the DNA substrate, which together with the progressing nucleotide cycle form the mechanistic basis for DNA recombination by continuous HJ branch migration. Branch migration allows RuvC to scan DNA until it finds its consensus sequence, where it cleaves and resolves cruciform DNA. This is Holliday junction branch migration complex subunit RuvB from Neisseria meningitidis serogroup A / serotype 4A (strain DSM 15465 / Z2491).